Reading from the N-terminus, the 130-residue chain is ESAT-6 secretion system extracellular protein C (130 aa).

Belongs to the EsxC family.

The protein localises to the secreted. The chain is ESAT-6 secretion system extracellular protein C from Staphylococcus aureus (strain MSSA476).